We begin with the raw amino-acid sequence, 334 residues long: Nucleoid-associated protein PFL_1060 (334 aa).

The protein belongs to the YejK family.

The protein localises to the cytoplasm. It is found in the nucleoid. In Pseudomonas fluorescens (strain ATCC BAA-477 / NRRL B-23932 / Pf-5), this protein is Nucleoid-associated protein PFL_1060.